The primary structure comprises 416 residues: Lipid phosphate phosphatase delta (416 aa).

2 consecutive transmembrane segments (helical) span residues 72-92 and 104-124; these read FFSGLSCVVSVPFYTAFLPLL and MTLLIAFCDYLGNCIKDVVSA. A phosphatase sequence motif I region spans residues 119-127; that stretch reads KDVVSAPRP. Positions 151 to 154 are phosphatase sequence motif II; sequence PSSH. Histidine 154 acts as the Proton donor in catalysis. A helical transmembrane segment spans residues 178–198; it reads VSIQYYGFALACLLVALIAFG. The segment at 198–209 is phosphatase sequence motif III; the sequence is GRVYLGMHSVVD. The Nucleophile role is filled by histidine 205. 5 helical membrane-spanning segments follow: residues 207-227, 241-261, 266-286, 302-322, and 393-413; these read VVDIVSGLAIGVLILGLWLTV, VSSFWTALSFLLLFAYPTPEH, YEYHTAFNGVTLGIVTGVQQT, ELPISSYLGRVMVGIPTILLV, and FFQYAGLAWSVVDLVPSLFSY.

Belongs to the type 2 lipid phosphate phosphatase family.

Its subcellular location is the endoplasmic reticulum membrane. Functionally, functions as a sphingoid long-chain base phosphate (LCBP) phosphatase. May play a role in the regulation of LCBP levels and be involved in stomatal responses through LCBP-mediated ABA signaling. In Arabidopsis thaliana (Mouse-ear cress), this protein is Lipid phosphate phosphatase delta (LPPD).